Consider the following 215-residue polypeptide: Peroxiredoxin-5, mitochondrial (215 aa).

A mitochondrion-targeting transit peptide spans 1 to 53 (MGLAGVCVLRRSAGYILGGAARQSVAATAAARRRSEGGWASGGVRSFSRAAAA). In terms of domain architecture, Thioredoxin spans 57–215 (IKVGDAIPAV…SLAPSIISQL (159 aa)). Residue Lys76 is modified to N6-acetyllysine. The residue at position 84 (Lys84) is an N6-acetyllysine; alternate. Lys84 bears the N6-succinyllysine; alternate mark. Cys101 serves as the catalytic Cysteine sulfenic acid (-SOH) intermediate. Cys101 carries S-palmitoyl cysteine lipidation. Cys101 and Cys205 form a disulfide bridge. The residue at position 117 (Lys117) is an N6-succinyllysine. 2 positions are modified to phosphoserine: Ser172 and Ser183. The Microbody targeting signal motif lies at 213–215 (SQL).

This sequence belongs to the peroxiredoxin family. Prx5 subfamily. As to quaternary structure, monomer. Post-translationally, S-palmitoylated. Palmitoylation occurs on the active site, inhibiting its reactivity; therefore PRDX5 palmitoylation status determines its antioxidant capacity. S-palmitoylated. Depalmitoylated by ABHD10.

It is found in the mitochondrion. It localises to the cytoplasm. The protein localises to the peroxisome matrix. The catalysed reaction is a hydroperoxide + [thioredoxin]-dithiol = an alcohol + [thioredoxin]-disulfide + H2O. In terms of biological role, thiol-specific peroxidase that catalyzes the reduction of hydrogen peroxide and organic hydroperoxides to water and alcohols, respectively. Plays a role in cell protection against oxidative stress by detoxifying peroxides and as sensor of hydrogen peroxide-mediated signaling events. This is Peroxiredoxin-5, mitochondrial (PRDX5) from Chlorocebus aethiops (Green monkey).